Reading from the N-terminus, the 269-residue chain is Shikimate dehydrogenase (NADP(+)) (269 aa).

Shikimate is bound by residues Ser-14–Ser-16 and Thr-61. The Proton acceptor role is filled by Lys-65. Glu-77 contributes to the NADP(+) binding site. Residues Asn-86 and Asp-102 each contribute to the shikimate site. NADP(+)-binding positions include Gly-126 to Ala-130, Asn-149 to Lys-154, and Met-213. Tyr-215 is a shikimate binding site. Gly-238 contacts NADP(+).

The protein belongs to the shikimate dehydrogenase family. Homodimer.

The catalysed reaction is shikimate + NADP(+) = 3-dehydroshikimate + NADPH + H(+). The protein operates within metabolic intermediate biosynthesis; chorismate biosynthesis; chorismate from D-erythrose 4-phosphate and phosphoenolpyruvate: step 4/7. Functionally, involved in the biosynthesis of the chorismate, which leads to the biosynthesis of aromatic amino acids. Catalyzes the reversible NADPH linked reduction of 3-dehydroshikimate (DHSA) to yield shikimate (SA). The chain is Shikimate dehydrogenase (NADP(+)) from Actinobacillus succinogenes (strain ATCC 55618 / DSM 22257 / CCUG 43843 / 130Z).